The sequence spans 369 residues: Cystathionine gamma-synthase (369 aa).

Lys-200 bears the N6-(pyridoxal phosphate)lysine mark.

This sequence belongs to the trans-sulfuration enzymes family. As to quaternary structure, homotetramer. It depends on pyridoxal 5'-phosphate as a cofactor.

It is found in the cytoplasm. It carries out the reaction O-succinyl-L-homoserine + L-cysteine = L,L-cystathionine + succinate + H(+). Catalyzes the formation of L-cystathionine from O-succinyl-L-homoserine (OSHS) and L-cysteine, via a gamma-replacement reaction. In the absence of thiol, catalyzes gamma-elimination to form 2-oxobutanoate, succinate and ammonia. The polypeptide is Cystathionine gamma-synthase (metB) (Haemophilus influenzae (strain ATCC 51907 / DSM 11121 / KW20 / Rd)).